Reading from the N-terminus, the 353-residue chain is Protein MGF 360-10L (353 aa).

The ANK repeat unit spans residues 57 to 89 (DLNTALMLATKENNYQLIKLFTEWGADINYGLI). N-linked (GlcNAc...) asparagine; by host glycosylation is present at asparagine 172. Transmembrane regions (helical) follow at residues 206–228 (LNTWWLICALCFNKLFDLHNLYE) and 249–271 (NFLTIYYCFILGANINLAMIASI). An N-linked (GlcNAc...) asparagine; by host glycan is attached at asparagine 342.

The protein belongs to the asfivirus MGF 360 family.

The protein localises to the host membrane. Functionally, plays a role in virus cell tropism, and may be required for efficient virus replication in macrophages. This is Protein MGF 360-10L from African swine fever virus (isolate Warthog/Namibia/Wart80/1980) (ASFV).